We begin with the raw amino-acid sequence, 418 residues long: MSEHTDCSVSSEDRVRALTKLGSSVDVSEDVPPRRYFRSGMEIIRMANIYADEGNVEHAFILYNKYITLFIEKLPKHREYKTANIPEKKETMRKLKEIAFPKAEELKKLLLKQYDKEHAEYLVRKRAEDAARAVEMLKQQEQEAQRQRLAELQQRQREQEQFSAFEEMIRRQELEKERRRIVQEFSIPVSPTAPDVLLPDVHGPPQASLSPQTPPAGATNHQGLPAFDRSLKPSVPVSAGHSALVNGLRQLFVPAELCQRFLKLAETNTARAVETCGILCGKLMKNAFTVTHVIVPKQCGGPDYCDTENEEELFLIQDQNDLITLGWIHTHPTQTAFLSSVDLHTHCSYQMMLPESIAIVCSPKFNETGYFRLTDYGMDDVGTCKQRGFHPHPKDPPLFAASHHVSITDGSVTMLDLR.

The segment at P199–A218 is disordered. The MPN domain maps to L251–G382. Zn(2+) contacts are provided by H329, H331, D342, H344, C384, H390, and H392. The JAMM motif motif lies at H329 to D342.

The protein belongs to the peptidase M67C family. Zn(2+) is required as a cofactor.

Its function is as follows. Zinc metalloprotease that specifically cleaves 'Lys-63'-linked polyubiquitin chains. Does not cleave 'Lys-48'-linked polyubiquitin chains. Functions at the endosome and is able to oppose the ubiquitin-dependent sorting of receptors to lysosomes. The protein is STAM-binding protein-like A (stambpa) of Danio rerio (Zebrafish).